Reading from the N-terminus, the 425-residue chain is Serine--tRNA ligase (425 aa).

Residue Thr-235–Glu-237 coordinates L-serine. Arg-266–Glu-268 lines the ATP pocket. Glu-289 is a binding site for L-serine. Glu-353–Ser-356 is a binding site for ATP. Ser-389 is a binding site for L-serine.

This sequence belongs to the class-II aminoacyl-tRNA synthetase family. Type-1 seryl-tRNA synthetase subfamily. As to quaternary structure, homodimer. The tRNA molecule binds across the dimer.

It is found in the cytoplasm. It catalyses the reaction tRNA(Ser) + L-serine + ATP = L-seryl-tRNA(Ser) + AMP + diphosphate + H(+). The enzyme catalyses tRNA(Sec) + L-serine + ATP = L-seryl-tRNA(Sec) + AMP + diphosphate + H(+). Its pathway is aminoacyl-tRNA biosynthesis; selenocysteinyl-tRNA(Sec) biosynthesis; L-seryl-tRNA(Sec) from L-serine and tRNA(Sec): step 1/1. Catalyzes the attachment of serine to tRNA(Ser). Is also able to aminoacylate tRNA(Sec) with serine, to form the misacylated tRNA L-seryl-tRNA(Sec), which will be further converted into selenocysteinyl-tRNA(Sec). This Desulfotalea psychrophila (strain LSv54 / DSM 12343) protein is Serine--tRNA ligase.